The primary structure comprises 252 residues: 5'-nucleotidase SurE (252 aa).

D8, D9, S39, and N91 together coordinate a divalent metal cation.

The protein belongs to the SurE nucleotidase family. The cofactor is a divalent metal cation.

The protein localises to the cytoplasm. It catalyses the reaction a ribonucleoside 5'-phosphate + H2O = a ribonucleoside + phosphate. Nucleotidase that shows phosphatase activity on nucleoside 5'-monophosphates. This chain is 5'-nucleotidase SurE, found in Geobacter metallireducens (strain ATCC 53774 / DSM 7210 / GS-15).